Here is a 276-residue protein sequence, read N- to C-terminus: NAD(+)--dinitrogen-reductase ADP-D-ribosyltransferase (276 aa).

As to quaternary structure, monomer.

The catalysed reaction is L-arginyl-[dinitrogen reductase] + NAD(+) = N(omega)-alpha-(ADP-D-ribosyl)-L-arginyl-[dinitrogen reductase] + nicotinamide + H(+). Its function is as follows. Involved in the regulation of the nitrogen fixation activity by the reversible ADP-ribosylation of the dinitrogenase reductase component of the nitrogenase enzyme complex. The ADP-ribosyltransferase (DraT) transfers the ADP-ribose group from NAD to dinitrogenase reductase. The ADP-ribose group is removed through the action of the ADP-ribosylglycohydrolase (DraG). This chain is NAD(+)--dinitrogen-reductase ADP-D-ribosyltransferase (draT), found in Rhodospirillum rubrum.